Here is a 241-residue protein sequence, read N- to C-terminus: Hydantoin racemase (241 aa).

It belongs to the HyuE racemase family. Homotetramer.

The catalysed reaction is a D-5-monosubstituted hydantoin = a L-5-monosubstituted hydantoin. The enzyme catalyses D-5-benzylhydantoin = L-5-benzylhydantoin. It carries out the reaction D-5-isobutylhydantoin = L-5-isobutylhydantoin. Its activity is regulated as follows. Inhibited by Cu(2+), Hg(2+), Pb(2+) and Zn(2+). The activity is twofold lower in the presence of Mn(2+), Co(2+) and Ni(2+). The insignificant effect of the metal chelating agent EDTA on the hydantoin racemase activity would indicate that it is not a metalloenzyme. May be involved in the asymmetric conversion of racemic 5-substituted hydantoins to the corresponding L-amino acids. Catalyzes the racemization via enolization of D- and L-5-monosubstituted hydantoins. In Rhizobium meliloti (Ensifer meliloti), this protein is Hydantoin racemase.